The chain runs to 204 residues: Protein GrpE (204 aa).

Basic and acidic residues predominate over residues 1-12; that stretch reads MSNQEKKMHEEE. Residues 1 to 37 are disordered; the sequence is MSNQEKKMHEEELQQQETVEADTEAEAEAVGTDADIE.

Belongs to the GrpE family. As to quaternary structure, homodimer.

It is found in the cytoplasm. In terms of biological role, participates actively in the response to hyperosmotic and heat shock by preventing the aggregation of stress-denatured proteins, in association with DnaK and GrpE. It is the nucleotide exchange factor for DnaK and may function as a thermosensor. Unfolded proteins bind initially to DnaJ; upon interaction with the DnaJ-bound protein, DnaK hydrolyzes its bound ATP, resulting in the formation of a stable complex. GrpE releases ADP from DnaK; ATP binding to DnaK triggers the release of the substrate protein, thus completing the reaction cycle. Several rounds of ATP-dependent interactions between DnaJ, DnaK and GrpE are required for fully efficient folding. The sequence is that of Protein GrpE from Vibrio proteolyticus (Aeromonas proteolytica).